Consider the following 403-residue polypeptide: Phosphopentomutase (403 aa).

Mn(2+)-binding residues include D13, D298, H303, D339, H340, and H351.

It belongs to the phosphopentomutase family. The cofactor is Mn(2+).

Its subcellular location is the cytoplasm. The enzyme catalyses 2-deoxy-alpha-D-ribose 1-phosphate = 2-deoxy-D-ribose 5-phosphate. It catalyses the reaction alpha-D-ribose 1-phosphate = D-ribose 5-phosphate. It functions in the pathway carbohydrate degradation; 2-deoxy-D-ribose 1-phosphate degradation; D-glyceraldehyde 3-phosphate and acetaldehyde from 2-deoxy-alpha-D-ribose 1-phosphate: step 1/2. Its function is as follows. Isomerase that catalyzes the conversion of deoxy-ribose 1-phosphate (dRib-1-P) and ribose 1-phosphate (Rib-1-P) to deoxy-ribose 5-phosphate (dRib-5-P) and ribose 5-phosphate (Rib-5-P), respectively. This is Phosphopentomutase from Streptococcus equi subsp. zooepidemicus (strain H70).